We begin with the raw amino-acid sequence, 371 residues long: Phospho-N-acetylmuramoyl-pentapeptide-transferase (371 aa).

9 helical membrane passes run 25–45, 77–94, 136–156, 172–192, 204–224, 240–260, 269–289, 296–316, and 348–368; these read TLLAAVTSLTIGFVIAPWLIA, MGGLIIFLSVFTSAALWA, IGWQSLATVVALGLLLWHPAS, LIPHMHWAVLLVLIYLWIVGF, GLAIGCTIPVALVFGIMAYVA, GTGELAVICGALIGGCMAFLW, FMGDTGSLALGGLIGVMAFMI, VIVGGVFVAEMLSVVVQVGVF, and KVVLRFWVLSLGCALAGLATL.

This sequence belongs to the glycosyltransferase 4 family. MraY subfamily. The cofactor is Mg(2+).

Its subcellular location is the cell inner membrane. It catalyses the reaction UDP-N-acetyl-alpha-D-muramoyl-L-alanyl-gamma-D-glutamyl-meso-2,6-diaminopimeloyl-D-alanyl-D-alanine + di-trans,octa-cis-undecaprenyl phosphate = di-trans,octa-cis-undecaprenyl diphospho-N-acetyl-alpha-D-muramoyl-L-alanyl-D-glutamyl-meso-2,6-diaminopimeloyl-D-alanyl-D-alanine + UMP. It participates in cell wall biogenesis; peptidoglycan biosynthesis. Functionally, catalyzes the initial step of the lipid cycle reactions in the biosynthesis of the cell wall peptidoglycan: transfers peptidoglycan precursor phospho-MurNAc-pentapeptide from UDP-MurNAc-pentapeptide onto the lipid carrier undecaprenyl phosphate, yielding undecaprenyl-pyrophosphoryl-MurNAc-pentapeptide, known as lipid I. The chain is Phospho-N-acetylmuramoyl-pentapeptide-transferase from Opitutus terrae (strain DSM 11246 / JCM 15787 / PB90-1).